A 2141-amino-acid chain; its full sequence is Oxygen-regulated protein 1 (2141 aa).

Positions 1–10 (MSETSSTSVS) are enriched in polar residues. The interval 1–20 (MSETSSTSVSMIHRSFEGQG) is disordered. Residues 34–116 (KKISFYKSGD…RRKVQPVDLD (83 aa)) form the Doublecortin 1 domain. A disordered region spans residues 126–149 (LSSRAISAHAQRSPPTSIGAAGAP). One can recognise a Doublecortin 2 domain in the interval 156–235 (RRLLVFRNGD…REPFKPGNYD (80 aa)). Disordered stretches follow at residues 259–278 (RSESRKMSTHVPSSPRSQIY), 1432–1458 (YTSSDKEDSKTSEEPGSITNSMTSSER), and 1589–1612 (DWSEFRPSSENEQPYKTSSDGPNG). The span at 268–278 (HVPSSPRSQIY) shows a compositional bias: polar residues. Residues 1435–1444 (SDKEDSKTSE) show a composition bias toward basic and acidic residues. Polar residues-rich tracts occupy residues 1448–1458 (SITNSMTSSER) and 1598–1610 (ENEQPYKTSSDGP).

In terms of assembly, interacts (via the doublecortin domains) with microtubules. Interacts with RP1L1. Interacts with MAK.

It localises to the cytoplasm. The protein localises to the cytoskeleton. The protein resides in the cilium axoneme. Its subcellular location is the cell projection. It is found in the cilium. It localises to the photoreceptor outer segment. Microtubule-associated protein regulating the stability and length of the microtubule-based axoneme of photoreceptors. Required for the differentiation of photoreceptor cells, it plays a role in the organization of the outer segment of rod and cone photoreceptors ensuring the correct orientation and higher-order stacking of outer segment disks along the photoreceptor axoneme. The protein is Oxygen-regulated protein 1 (RP1) of Canis lupus familiaris (Dog).